Here is a 224-residue protein sequence, read N- to C-terminus: tRNA (guanine-N(7)-)-methyltransferase (224 aa).

S-adenosyl-L-methionine-binding residues include Glu54, Glu79, and Asp129. Residue Asp129 is part of the active site. The substrate site is built by Lys133 and Asp165.

This sequence belongs to the class I-like SAM-binding methyltransferase superfamily. TrmB family.

The catalysed reaction is guanosine(46) in tRNA + S-adenosyl-L-methionine = N(7)-methylguanosine(46) in tRNA + S-adenosyl-L-homocysteine. The protein operates within tRNA modification; N(7)-methylguanine-tRNA biosynthesis. Functionally, catalyzes the formation of N(7)-methylguanine at position 46 (m7G46) in tRNA. The chain is tRNA (guanine-N(7)-)-methyltransferase from Chlamydia pneumoniae (Chlamydophila pneumoniae).